Here is a 354-residue protein sequence, read N- to C-terminus: Putative succinyl-diaminopimelate desuccinylase DapE (354 aa).

His69 is a Zn(2+) binding site. The active site involves Asp71. Asp95 is a binding site for Zn(2+). The Proton acceptor role is filled by Glu125. Residues Glu126, Glu154, and His330 each contribute to the Zn(2+) site.

The protein belongs to the peptidase M20A family. As to quaternary structure, homodimer. The cofactor is Zn(2+). Co(2+) serves as cofactor.

It catalyses the reaction N-succinyl-(2S,6S)-2,6-diaminopimelate + H2O = (2S,6S)-2,6-diaminopimelate + succinate. The protein operates within amino-acid biosynthesis; L-lysine biosynthesis via DAP pathway; LL-2,6-diaminopimelate from (S)-tetrahydrodipicolinate (succinylase route): step 3/3. Catalyzes the hydrolysis of N-succinyl-L,L-diaminopimelic acid (SDAP), forming succinate and LL-2,6-diaminoheptanedioate (DAP), an intermediate involved in the bacterial biosynthesis of lysine and meso-diaminopimelic acid. This is Putative succinyl-diaminopimelate desuccinylase DapE (dapE) from Mycobacterium tuberculosis (strain CDC 1551 / Oshkosh).